The sequence spans 492 residues: Serine carboxypeptidase-like 31 (492 aa).

The signal sequence occupies residues 1–30; sequence MDNYQTKNISNLLTSLCFTTLLILAPVVIC. 3 disulfides stabilise this stretch: Cys-105–Cys-376, Cys-270–Cys-283, and Cys-307–Cys-344. Residue Asn-156 is glycosylated (N-linked (GlcNAc...) asparagine). The active site involves Ser-198. 2 N-linked (GlcNAc...) asparagine glycosylation sites follow: Asn-221 and Asn-271. Asn-372 and Asn-383 each carry an N-linked (GlcNAc...) asparagine glycan. Active-site residues include Asp-413 and His-465.

Belongs to the peptidase S10 family. Expressed in roots, senescent leaves, stems, flowers and siliques.

The protein localises to the secreted. Its function is as follows. Probable carboxypeptidase. The sequence is that of Serine carboxypeptidase-like 31 (SCPL31) from Arabidopsis thaliana (Mouse-ear cress).